The chain runs to 1373 residues: DNA-directed RNA polymerase subunit beta (1373 aa).

Belongs to the RNA polymerase beta chain family. As to quaternary structure, the RNAP catalytic core consists of 2 alpha, 1 beta, 1 beta' and 1 omega subunit. When a sigma factor is associated with the core the holoenzyme is formed, which can initiate transcription.

The enzyme catalyses RNA(n) + a ribonucleoside 5'-triphosphate = RNA(n+1) + diphosphate. DNA-dependent RNA polymerase catalyzes the transcription of DNA into RNA using the four ribonucleoside triphosphates as substrates. The chain is DNA-directed RNA polymerase subunit beta from Rickettsia felis (strain ATCC VR-1525 / URRWXCal2) (Rickettsia azadi).